The chain runs to 382 residues: Aminotransferase FGSG_00049 (382 aa).

R80 provides a ligand contact to pyridoxal 5'-phosphate. At K181 the chain carries N6-(pyridoxal phosphate)lysine. E217 contributes to the pyridoxal 5'-phosphate binding site.

This sequence belongs to the class-IV pyridoxal-phosphate-dependent aminotransferase family. It depends on pyridoxal 5'-phosphate as a cofactor.

It participates in mycotoxin biosynthesis. Functionally, aminotransferase; part of the gene cluster that mediates the biosynthesis of gramillins A and B, bicyclic lipopeptides that induce cell death in maize leaves but not in wheat leaves. The nonribosomal peptide synthetase GRA1 incorporates respectively a glutamic adic (Glu), a leucine (Leu), a serine (Ser), a hydroxyglutamine (HOGln), a 2-amino decanoic acid, and 2 cysteins (CysB and CysA). The biosynthesis of 2-amino decanoic acid incorporated in gramillins could be initiated by a fatty acid synthase composed of the alpha and beta subunits FGSG_00036 and FGSG_11656. The cytochrome P450 monooxygenase FGSG_15680 could hydroxylate the fatty acid chain. Subsequent oxidation to the ketone by the oxidoreductase FGSG_00048 and transamination by aminotransferase FGSG_00049 could form 2-amino-decanoic acid. On the other hand, FGSG_15680 could also be responsible for the HO-modified glutamine at the gamma-position. Whether hydroxylation occurs on the fully assembled product or on the Gln residue prior to assembly into the gramillins requires further proof. The thioredoxin FGSG_00043 could also be required for the disulfide-bond formation between CysA and CysB. The specific involvement of the remaining proteins from the cluster is more difficult to discern, but could have broader regulatory (FGSG_00040 and FGSG_11657) or enzymatic functions (FGSG_00044 and FGSG_00045). The final C-domain of GRA1 does not possess the expected sequence of a termination CT domain, often implicated in macrocyclization and release of a cyclopeptidein fungal NRPs; and the thioesterase FGSG_00047 may act in concert with the terminal C-domain of GRA1 to catalyze the formation of the macrocyclic anhydride and release of the products. This chain is Aminotransferase FGSG_00049, found in Gibberella zeae (strain ATCC MYA-4620 / CBS 123657 / FGSC 9075 / NRRL 31084 / PH-1) (Wheat head blight fungus).